The primary structure comprises 222 residues: Pyridoxine/pyridoxamine 5'-phosphate oxidase (222 aa).

FMN is bound by residues 69 to 74, 84 to 85, lysine 91, and glutamine 113; these read RMVLLK and YT. Lysine 74 contacts substrate. Tyrosine 131, arginine 135, and serine 139 together coordinate substrate. Residues 148 to 149 and tryptophan 193 contribute to the FMN site; that span reads QS. 199-201 contacts substrate; sequence RLH. Arginine 203 contacts FMN.

Belongs to the pyridoxamine 5'-phosphate oxidase family. In terms of assembly, homodimer. Requires FMN as cofactor.

It catalyses the reaction pyridoxamine 5'-phosphate + O2 + H2O = pyridoxal 5'-phosphate + H2O2 + NH4(+). The catalysed reaction is pyridoxine 5'-phosphate + O2 = pyridoxal 5'-phosphate + H2O2. It participates in cofactor metabolism; pyridoxal 5'-phosphate salvage; pyridoxal 5'-phosphate from pyridoxamine 5'-phosphate: step 1/1. Its pathway is cofactor metabolism; pyridoxal 5'-phosphate salvage; pyridoxal 5'-phosphate from pyridoxine 5'-phosphate: step 1/1. Functionally, catalyzes the oxidation of either pyridoxine 5'-phosphate (PNP) or pyridoxamine 5'-phosphate (PMP) into pyridoxal 5'-phosphate (PLP). This chain is Pyridoxine/pyridoxamine 5'-phosphate oxidase, found in Maricaulis maris (strain MCS10) (Caulobacter maris).